Consider the following 360-residue polypeptide: Amine dehydrogenase (360 aa).

This sequence belongs to the amine dehydrogenase family. As to quaternary structure, homodimer.

The catalysed reaction is a secondary alkyl amine + NAD(+) + H2O = a ketone + NH4(+) + NADH + H(+). The enzyme catalyses a secondary alkyl amine + NADP(+) + H2O = a ketone + NH4(+) + NADPH + H(+). It catalyses the reaction serinol + NAD(+) + H2O = dihydroxyacetone + NH4(+) + NADH + H(+). It carries out the reaction serinol + NADP(+) + H2O = dihydroxyacetone + NH4(+) + NADPH + H(+). The catalysed reaction is 2-aminopropan-1-ol + NAD(+) + H2O = hydroxyacetone + NH4(+) + NADH + H(+). The enzyme catalyses (R)-1-phenylethylamine + NAD(+) + H2O = acetophenone + NH4(+) + NADH + H(+). It catalyses the reaction (S)-1-phenylethylamine + NAD(+) + H2O = acetophenone + NH4(+) + NADH + H(+). It carries out the reaction (2S)-2-aminobutan-1-ol + NAD(+) + H2O = 1-hydroxy-2-butanone + NH4(+) + NADH + H(+). The catalysed reaction is (2S)-2-amino-3-methylbutan-1-ol + NAD(+) + H2O = 1-hydroxy-3-methylbutan-2-one + NH4(+) + NADH + H(+). The enzyme catalyses 2-aminopentan-1-ol + NAD(+) + H2O = 1-hydroxypentan-2-one + NH4(+) + NADH + H(+). It catalyses the reaction (S)-leucinol + NAD(+) + H2O = 1-hydroxy-4-methylpentan-2-one + NH4(+) + NADH + H(+). It carries out the reaction (S)-isoleucinol + NAD(+) + H2O = (3S)-1-hydroxy-3-methylpentan-2-one + NH4(+) + NADH + H(+). The catalysed reaction is (S)-methioninol + NAD(+) + H2O = 1-hydroxy-4-(methythio)butan-2-one + NH4(+) + NADH + H(+). The enzyme catalyses 2-aminocyclohexanol + NAD(+) + H2O = 2-hydroxycyclohexan-1-one + NH4(+) + NADH + H(+). It catalyses the reaction L-alanine + NAD(+) + H2O = pyruvate + NH4(+) + NADH + H(+). It carries out the reaction D-alanine + NAD(+) + H2O = pyruvate + NH4(+) + NADH + H(+). The catalysed reaction is L-aspartate + NAD(+) + H2O = oxaloacetate + NH4(+) + NADH + H(+). The enzyme catalyses D-aspartate + NAD(+) + H2O = oxaloacetate + NH4(+) + NADH + H(+). It catalyses the reaction L-glutamate + NAD(+) + H2O = 2-oxoglutarate + NH4(+) + NADH + H(+). It carries out the reaction D-glutamate + NAD(+) + H2O = 2-oxoglutarate + NH4(+) + NADH + H(+). The catalysed reaction is L-serine + NAD(+) + H2O = 3-hydroxypyruvate + NH4(+) + NADH + H(+). The enzyme catalyses D-serine + NAD(+) + H2O = 3-hydroxypyruvate + NH4(+) + NADH + H(+). It catalyses the reaction methylamine + NAD(+) + H2O = formaldehyde + NH4(+) + NADH + H(+). It carries out the reaction ethylamine + NAD(+) + H2O = acetaldehyde + NH4(+) + NADH + H(+). The catalysed reaction is propylamine + NAD(+) + H2O = propanal + NH4(+) + NADH + H(+). The enzyme catalyses butylamine + NAD(+) + H2O = butanal + NH4(+) + NADH + H(+). It catalyses the reaction hexylamine + NAD(+) + H2O = hexanal + NH4(+) + NADH + H(+). It carries out the reaction octylamine + NAD(+) + H2O = octanal + NH4(+) + NADH + H(+). The catalysed reaction is (R)-sec-butylamine + NAD(+) + H2O = butan-2-one + NH4(+) + NADH + H(+). The enzyme catalyses (S)-sec-butylamine + NAD(+) + H2O = butan-2-one + NH4(+) + NADH + H(+). It catalyses the reaction 2-aminopentane + NAD(+) + H2O = pentan-2-one + NH4(+) + NADH + H(+). It carries out the reaction 3-aminopentane + NAD(+) + H2O = pentan-3-one + NH4(+) + NADH + H(+). The catalysed reaction is (2R)-heptan-2-amine + NAD(+) + H2O = heptan-2-one + NH4(+) + NADH + H(+). The enzyme catalyses (2S)-heptan-2-amine + NAD(+) + H2O = heptan-2-one + NH4(+) + NADH + H(+). It catalyses the reaction benzylamine + NAD(+) + H2O = benzaldehyde + NH4(+) + NADH + H(+). It carries out the reaction 3-aminobutan-2-ol + NAD(+) + H2O = acetoin + NH4(+) + NADH + H(+). The catalysed reaction is 3-aminobutan-1-ol + NAD(+) + H2O = 4-hydroxybutan-2-one + NH4(+) + NADH + H(+). The enzyme catalyses 5-hydroxypentan-2-amine + NAD(+) + H2O = 5-hydroxypentan-2-one + NH4(+) + NADH + H(+). It catalyses the reaction 4-hydroxyhexan-3-amine + NAD(+) + H2O = 4-hydroxyhexan-3-one + NH4(+) + NADH + H(+). It carries out the reaction 5-hydroxyoctan-4-amine + NAD(+) + H2O = 5-hydroxyoctan-4-one + NH4(+) + NADH + H(+). The catalysed reaction is 2-hydroxy-1-phenylethan-1-amine + NAD(+) + H2O = 2-hydroxyacetophenone + NH4(+) + NADH + H(+). The enzyme catalyses hexan-2-amine + NAD(+) + H2O = hexan-2-one + NH4(+) + NADH + H(+). It catalyses the reaction 4-phenylbutan-2-amine + NAD(+) + H2O = 4-phenylbutan-2-one + NH4(+) + NADH + H(+). In terms of biological role, catalyzes the reversible oxidative deaminations of a broad range of amines, amino alcohols and amino acids. Catalyzes the reversible dehydrogenation of serinol in the presence of NAD(+) to give dihydroxyacetone, ammonium ion and NADH, while NADP(+) shows a slight activity. Is also able to produce 2-amino-1-propanol and aspartate by the reductive amination of the corresponding keto alcohol (hydroxyacetone) and keto acid (oxaloacetate) in the presence of ammonium ions and NADH, and that of acetophenone from phenylethylamine by the oxidative deamination in the presence of NAD(+). In Streptomyces virginiae (Streptomyces cinnamonensis), this protein is Amine dehydrogenase.